A 182-amino-acid polypeptide reads, in one-letter code: Pyruvate synthase subunit PorC (182 aa).

As to quaternary structure, heterotetramer of one alpha, one beta, one delta and one gamma chain.

It carries out the reaction 2 oxidized [2Fe-2S]-[ferredoxin] + pyruvate + CoA = 2 reduced [2Fe-2S]-[ferredoxin] + acetyl-CoA + CO2 + H(+). The polypeptide is Pyruvate synthase subunit PorC (porC) (Methanosarcina barkeri (strain Fusaro / DSM 804)).